The primary structure comprises 427 residues: WD repeat and SOCS box-containing protein 1 (427 aa).

WD repeat units lie at residues 129–170, 173–213, 217–256, 259–298, and 314–353; these read SRSI…LLLN, DHTD…NMVK, GHPN…LIRK, GHHN…ILLE, and ANDR…PQAV. The SOCS box domain occupies 379–427; sequence SVHFWECPRSIASLQHLCRMALRRVKTTQQVEALPVPMPLRDFLTYRVV.

Component of a probable ECS E3 ubiquitin-protein ligase complex that contains the Elongin BC complex.

The protein operates within protein modification; protein ubiquitination. Functionally, probable substrate-recognition component of a SCF-like ECS (Elongin-Cullin-SOCS-box protein) E3 ubiquitin-protein ligase complex which mediates the ubiquitination and subsequent proteasomal degradation of target proteins. In Takifugu rubripes (Japanese pufferfish), this protein is WD repeat and SOCS box-containing protein 1 (wsb1).